The sequence spans 356 residues: Inactive ubiquitin thioesterase OTULINL (356 aa).

Positions 1 to 22 are disordered; it reads MAATRSPTRARERERSGAPAAG. The required for membrane binding stretch occupies residues 1 to 83; sequence MAATRSPTRA…KWWIGYLQRK (83 aa). Residues 128-356 form the OTU domain; that stretch reads KCVRQVRRDN…NDRHYHIPVF (229 aa).

It belongs to the peptidase C65 family. Otulin subfamily. In terms of assembly, does not bind ubiquitin or ubiquitin-like proteins.

It is found in the cytoplasm. The protein localises to the endoplasmic reticulum membrane. The protein resides in the nucleus envelope. In terms of biological role, lacks deubiquitinase activity. The chain is Inactive ubiquitin thioesterase OTULINL from Homo sapiens (Human).